A 400-amino-acid chain; its full sequence is Cytochrome b (400 aa).

A helical transmembrane segment spans residues Leu-47–Met-67. His-97 and His-111 together coordinate heme b. The next 8 helical transmembrane spans lie at Ala-98–Tyr-118, Ile-131–Trp-151, Phe-166–Val-186, Phe-194–Val-214, Phe-247–Tyr-267, Leu-306–Asp-326, Ile-341–Ala-361, and Ile-368–Gly-388. Positions 198 and 212 each coordinate heme b.

The protein belongs to the cytochrome b family. The main subunits of complex b-c1 are: cytochrome b, cytochrome c1 and the Rieske protein. Heme b is required as a cofactor.

Its subcellular location is the cell membrane. In terms of biological role, component of the ubiquinol-cytochrome c reductase complex (complex III or cytochrome b-c1 complex), which is a respiratory chain that generates an electrochemical potential coupled to ATP synthesis. This is Cytochrome b (petB) from Rickettsia bellii (strain RML369-C).